Reading from the N-terminus, the 325-residue chain is Tetraacyldisaccharide 4'-kinase (325 aa).

54-61 (SVGGTGKT) provides a ligand contact to ATP.

It belongs to the LpxK family.

It carries out the reaction a lipid A disaccharide + ATP = a lipid IVA + ADP + H(+). Its pathway is glycolipid biosynthesis; lipid IV(A) biosynthesis; lipid IV(A) from (3R)-3-hydroxytetradecanoyl-[acyl-carrier-protein] and UDP-N-acetyl-alpha-D-glucosamine: step 6/6. Its function is as follows. Transfers the gamma-phosphate of ATP to the 4'-position of a tetraacyldisaccharide 1-phosphate intermediate (termed DS-1-P) to form tetraacyldisaccharide 1,4'-bis-phosphate (lipid IVA). The polypeptide is Tetraacyldisaccharide 4'-kinase (Rickettsia felis (strain ATCC VR-1525 / URRWXCal2) (Rickettsia azadi)).